A 186-amino-acid polypeptide reads, in one-letter code: MADTWEAAHSAIKTGIIAYPTEAVFGLGCDPRNEVAVQKLLSLKQRPAEKGLILIAADYSQLLPYVEDSAIAQDKRFSVLSHWPGPVTLILPVRKGVSTLLTGGRDTIAVRVTAHEPARALCRELGHALVSTSANLTGQEPARTAAEVRQQFGDSVDWIMDESTGGAANPTRIINPLNNQVFRDDA.

A YrdC-like domain is found at 1–186; that stretch reads MADTWEAAHS…LNNQVFRDDA (186 aa).

The protein belongs to the SUA5 family. TsaC subfamily.

Its subcellular location is the cytoplasm. The enzyme catalyses L-threonine + hydrogencarbonate + ATP = L-threonylcarbamoyladenylate + diphosphate + H2O. Required for the formation of a threonylcarbamoyl group on adenosine at position 37 (t(6)A37) in tRNAs that read codons beginning with adenine. Catalyzes the conversion of L-threonine, HCO(3)(-)/CO(2) and ATP to give threonylcarbamoyl-AMP (TC-AMP) as the acyladenylate intermediate, with the release of diphosphate. This is Threonylcarbamoyl-AMP synthase from Idiomarina loihiensis (strain ATCC BAA-735 / DSM 15497 / L2-TR).